Consider the following 49-residue polypeptide: uncharacterized protein (49 aa).

The protein belongs to the metallo-dependent hydrolases superfamily. TatD-type hydrolase family. A divalent metal cation is required as a cofactor.

This is an uncharacterized protein from Geobacillus stearothermophilus (Bacillus stearothermophilus).